The chain runs to 1544 residues: Lysine-specific demethylase 5B (1544 aa).

Residues 32-73 (CPVFEPSWEEFADPFAFIHKIRPIAEQTGICKVRPPPDWQPP) enclose the JmjN domain. The 91-residue stretch at 97–187 (TRVKLNFLDQ…ILNPYNLFLS (91 aa)) folds into the ARID domain. Residues Lys148, Lys204, Lys209, Lys242, Lys274, and Lys278 each participate in a glycyl lysine isopeptide (Lys-Gly) (interchain with G-Cter in SUMO2) cross-link. Positions 201–230 (TDTKDKEYKPHDIPQRQSVQPSETCPPARR) are disordered. Basic and acidic residues predominate over residues 202-214 (DTKDKEYKPHDIP). A PHD-type 1 zinc finger spans residues 309–359 (LYVCLLCGSGNDEDRLLLCDGCDDSYHTFCLIPPLHDVPKGDWRCPKCLAQ). Tyr425 is a binding site for 2-oxoglutarate. Residues 453-619 (EYLDSGWNLN…LGRQCVEHYR (167 aa)) enclose the JmjC domain. Residues His499 and Glu501 each contribute to the Fe cation site. 2-oxoglutarate-binding residues include Ser507, Asn509, and Lys517. His587 is a Fe cation binding site. The segment at 692–744 (CVKCKTTCFMSAISCSCKPGLLVCLHHVKELCSCPPYKYKLRYRYTLDDLYPM) adopts a C5HC2 zinc-finger fold. A Glycyl lysine isopeptide (Lys-Gly) (interchain with G-Cter in SUMO2) cross-link involves residue Lys769. Lys832 carries the post-translational modification N6-acetyllysine. Ser986 is subject to Phosphoserine. The segment at 1176-1224 (IKICLCQKAPAAPMIQCELCRDAFHTSCVAVPSISQGLRIWLCPHCRRS) adopts a PHD-type 2 zinc-finger fold. At Ser1328 the chain carries Phosphoserine. Positions 1374-1400 (PSPAQQTDRSSPVRPSSEKNDCCRGKR) are disordered. Positions 1376-1387 (PAQQTDRSSPVR) are enriched in polar residues. Residues 1389–1400 (SSEKNDCCRGKR) show a composition bias toward basic and acidic residues. Lys1450 participates in a covalent cross-link: Glycyl lysine isopeptide (Lys-Gly) (interchain with G-Cter in SUMO2). Ser1456 bears the Phosphoserine mark. A PHD-type 3 zinc finger spans residues 1484-1538 (DAICPAVSCLQPEGDEVDWVQCDGSCNQWFHQVCVGVSPEMAEKEDYICVRCTVK).

It belongs to the JARID1 histone demethylase family. Interacts with FOXG1B, PAX9, MYC, MYCN and RB1. Interacts with HDAC1, HDAC4, HDAC5 and HDAC7. Interacts (via PHD-type 1 zinc finger) with histone H3 unmodified at 'Lys-4'; the interaction is inhibited when histone H3 is methylated at 'Arg-2' or 'Lys-4'. Fe(2+) serves as cofactor. As to expression, ubiquitously expressed, with highest levels in testis. Down-regulated in melanoma and glioblastoma. Up-regulated in breast cancer (at protein level).

It is found in the nucleus. It carries out the reaction N(6),N(6),N(6)-trimethyl-L-lysyl(4)-[histone H3] + 3 2-oxoglutarate + 3 O2 = L-lysyl(4)-[histone H3] + 3 formaldehyde + 3 succinate + 3 CO2. Its activity is regulated as follows. Several specific inhibitors are being developed and tested. The inhibitor KDOAM-25 inhibits its demethylase activity, resulting to cell cycle arrest in myeloma cells. Histone demethylase that demethylates 'Lys-4' of histone H3, thereby playing a central role in histone code. Does not demethylate histone H3 'Lys-9' or H3 'Lys-27'. Demethylates trimethylated, dimethylated and monomethylated H3 'Lys-4'. Acts as a transcriptional corepressor for FOXG1B and PAX9. Favors the proliferation of breast cancer cells by repressing tumor suppressor genes such as BRCA1 and HOXA5. In contrast, may act as a tumor suppressor for melanoma. Represses the CLOCK-BMAL1 heterodimer-mediated transcriptional activation of the core clock component PER2. In Homo sapiens (Human), this protein is Lysine-specific demethylase 5B (KDM5B).